A 311-amino-acid polypeptide reads, in one-letter code: Ketoisovalerate oxidoreductase subunit VorB (311 aa).

As to quaternary structure, heterotetramer of one alpha, one beta, one delta and one gamma chain.

The enzyme catalyses 3-methyl-2-oxobutanoate + 2 oxidized [2Fe-2S]-[ferredoxin] + CoA = 2-methylpropanoyl-CoA + 2 reduced [2Fe-2S]-[ferredoxin] + CO2 + H(+). The sequence is that of Ketoisovalerate oxidoreductase subunit VorB (vorB) from Pyrococcus abyssi (strain GE5 / Orsay).